We begin with the raw amino-acid sequence, 197 residues long: Dermorphin-1 (197 aa).

An N-terminal signal peptide occupies residues 1-20 (MSFLKKSLLLILFLGLVSLS). A propeptide spanning residues 21–45 (VCKEEKRETEEENENEENHEEGSEM) is cleaved from the precursor. The tract at residues 24–197 (EEKRETEEEN…GYPSGEAKKM (174 aa)) is disordered. Over residues 30–39 (EEENENEENH) the composition is skewed to acidic residues. Over residues 40 to 62 (EEGSEMKRYMFHLMDGEAKKRDS) the composition is skewed to basic and acidic residues. Met49 is subject to D-methionine. Aspartic acid 1-amide is present on Asp54. The propeptide occupies 56 to 77 (EAKKRDSEENEIEENHEEGSEM). Ala81 is subject to D-alanine (Ala). At Ser86 the chain carries Serine amide. Basic and acidic residues predominate over residues 88–97 (EAKKIKRVSE). A propeptide spanning residues 88–112 (EAKKIKRVSEEENENEENHEEGSEM) is cleaved from the precursor. Position 116 is a D-alanine (Ala) (Ala116). Position 121 is a serine amide (Ser121). The segment covering 123-132 (EAKKIKRESE) has biased composition (basic and acidic residues). A propeptide spanning residues 123-147 (EAKKIKRESEEEKEIEENHEEGSEM) is cleaved from the precursor. Ala151 bears the D-alanine (Ala) mark. Ser156 is subject to Serine amide. Residues 158-182 (EAKKIKRESEEENENEENHEEGSEM) constitute a propeptide that is removed on maturation. The segment covering 167–176 (EEENENEENH) has biased composition (acidic residues). The residue at position 186 (Ala186) is a D-alanine (Ala). The residue at position 191 (Ser191) is a Serine amide. The propeptide occupies 193–197 (EAKKM).

Belongs to the frog skin active peptide (FSAP) family. Dermorphin subfamily. Expressed by the skin glands.

The protein resides in the secreted. Its function is as follows. Dermorphin has a very potent opiate-like activity. It has high affinity and selectivity for mu-type opioid receptors. Functionally, deltorphin has a very potent opiate-like activity. It has high affinity and selectivity for delta-type opioid receptors. The polypeptide is Dermorphin-1 (Phyllomedusa sauvagei (Sauvage's leaf frog)).